Consider the following 661-residue polypeptide: UvrABC system protein B (661 aa).

One can recognise a Helicase ATP-binding domain in the interval 28–414 (DGVNEGKRHQ…HTDEMVEQII (387 aa)). 41–48 (GATGTGKT) contributes to the ATP binding site. Residues 94 to 117 (YYDYYQPEAYVPSTDTFIEKDASI) carry the Beta-hairpin motif. In terms of domain architecture, Helicase C-terminal spans 432–598 (QIDDLLSEIQ…TINKKIHDVI (167 aa)). Residues 603-624 (ESDETNQQQQTELPKKMTKKER) form a disordered region. Positions 625–660 (QKTIENIEKEMKKAAKDLDFEKATELRDMLFELKAE) constitute a UVR domain.

This sequence belongs to the UvrB family. As to quaternary structure, forms a heterotetramer with UvrA during the search for lesions. Interacts with UvrC in an incision complex.

The protein localises to the cytoplasm. Its function is as follows. The UvrABC repair system catalyzes the recognition and processing of DNA lesions. A damage recognition complex composed of 2 UvrA and 2 UvrB subunits scans DNA for abnormalities. Upon binding of the UvrA(2)B(2) complex to a putative damaged site, the DNA wraps around one UvrB monomer. DNA wrap is dependent on ATP binding by UvrB and probably causes local melting of the DNA helix, facilitating insertion of UvrB beta-hairpin between the DNA strands. Then UvrB probes one DNA strand for the presence of a lesion. If a lesion is found the UvrA subunits dissociate and the UvrB-DNA preincision complex is formed. This complex is subsequently bound by UvrC and the second UvrB is released. If no lesion is found, the DNA wraps around the other UvrB subunit that will check the other stand for damage. The polypeptide is UvrABC system protein B (Staphylococcus epidermidis (strain ATCC 35984 / DSM 28319 / BCRC 17069 / CCUG 31568 / BM 3577 / RP62A)).